The chain runs to 311 residues: Telomere-binding protein I1 homolog (311 aa).

The protein belongs to the chordopoxvirinae I1 family.

The protein localises to the virion. Functionally, late DNA-binding protein which binds to the hairpin form of the viral telomeric sequence. Required for the production of mature virions (MV). The protein is Telomere-binding protein I1 homolog of Fowlpox virus (strain NVSL) (FPV).